A 178-amino-acid polypeptide reads, in one-letter code: Transcription antitermination protein NusB (178 aa).

Belongs to the NusB family.

Involved in transcription antitermination. Required for transcription of ribosomal RNA (rRNA) genes. Binds specifically to the boxA antiterminator sequence of the ribosomal RNA (rrn) operons. In Alkalilimnicola ehrlichii (strain ATCC BAA-1101 / DSM 17681 / MLHE-1), this protein is Transcription antitermination protein NusB.